The sequence spans 384 residues: S-adenosylmethionine synthase (384 aa).

H15 contributes to the ATP binding site. D17 provides a ligand contact to Mg(2+). E43 serves as a coordination point for K(+). Residues E56 and Q99 each coordinate L-methionine. Positions 99 to 109 (QSADINQGVDR) are flexible loop. ATP-binding positions include 164–166 (DAK), 230–231 (RF), D239, 245–246 (RK), A262, and K266. D239 is an L-methionine binding site. K270 contributes to the L-methionine binding site.

This sequence belongs to the AdoMet synthase family. Homotetramer; dimer of dimers. It depends on Mg(2+) as a cofactor. Requires K(+) as cofactor.

It localises to the cytoplasm. The catalysed reaction is L-methionine + ATP + H2O = S-adenosyl-L-methionine + phosphate + diphosphate. It functions in the pathway amino-acid biosynthesis; S-adenosyl-L-methionine biosynthesis; S-adenosyl-L-methionine from L-methionine: step 1/1. Functionally, catalyzes the formation of S-adenosylmethionine (AdoMet) from methionine and ATP. The overall synthetic reaction is composed of two sequential steps, AdoMet formation and the subsequent tripolyphosphate hydrolysis which occurs prior to release of AdoMet from the enzyme. In Haemophilus influenzae (strain ATCC 51907 / DSM 11121 / KW20 / Rd), this protein is S-adenosylmethionine synthase.